A 353-amino-acid chain; its full sequence is Rhodopsin (353 aa).

Residues 1-36 (MNGTEGPYFYIPMVNTTGIVRSPYEYPQYYLVNPAA) are Extracellular-facing. N-linked (GlcNAc...) asparagine glycans are attached at residues N2 and N15. A helical transmembrane segment spans residues 37–61 (YAALGAYMFLLILLGFPINFLTLYV). Topologically, residues 62–73 (TIEHKKLRTPLN) are cytoplasmic. A helical transmembrane segment spans residues 74–96 (YILLNLAVANLFMVFGGFTTTMY). Over 97-110 (TSMHGYFVLGRLGC) the chain is Extracellular. C110 and C187 form a disulfide bridge. A helical membrane pass occupies residues 111 to 133 (NLEGFFATLGGEIALWSLVVLAV). The short motif at 134–136 (ERW) is the 'Ionic lock' involved in activated form stabilization element. The Cytoplasmic segment spans residues 134 to 152 (ERWMVVCKPISNFRFGENH). The helical transmembrane segment at 153 to 173 (AIMGLAFTWVMASACAVPPLV) threads the bilayer. The Extracellular portion of the chain corresponds to 174-202 (GWSRYIPEGMQCSCGIDYYTRAEGFNNES). N-linked (GlcNAc...) asparagine glycosylation is present at N200. Residues 203–224 (FVIYMFVCHFLIPLVVVFFCYG) traverse the membrane as a helical segment. Over 225–252 (RLLCAVKEAAAAQQESETTQRAEREVSR) the chain is Cytoplasmic. Residues 253–274 (MVVIMVVAFLICWCPYAGVAWY) traverse the membrane as a helical segment. Residues 275–286 (IFTHQGSEFGPL) are Extracellular-facing. Residues 287–308 (FMTFPAFFAKSSSIYNPMIYIC) traverse the membrane as a helical segment. An N6-(retinylidene)lysine modification is found at K296. The Cytoplasmic portion of the chain corresponds to 309–353 (MNKQFRHCMITTLCCGKNPFEEEEGASTTSKTEASSVSSSSVSPA). 2 S-palmitoyl cysteine lipidation sites follow: C322 and C323. A disordered region spans residues 330–353 (EEEGASTTSKTEASSVSSSSVSPA). Residues 334-353 (ASTTSKTEASSVSSSSVSPA) show a composition bias toward low complexity.

Belongs to the G-protein coupled receptor 1 family. Opsin subfamily. Phosphorylated on some or all of the serine and threonine residues present in the C-terminal region. In terms of processing, contains one covalently linked retinal chromophore.

The protein resides in the membrane. It is found in the cell projection. Its subcellular location is the cilium. The protein localises to the photoreceptor outer segment. In terms of biological role, photoreceptor required for image-forming vision at low light intensity. While most salt water fish species use retinal as chromophore, most freshwater fish use 3-dehydroretinal, or a mixture of retinal and 3-dehydroretinal. Light-induced isomerization of 11-cis to all-trans retinal triggers a conformational change that activates signaling via G-proteins. Subsequent receptor phosphorylation mediates displacement of the bound G-protein alpha subunit by arrestin and terminates signaling. This chain is Rhodopsin (rho), found in Mugil cephalus (Flathead mullet).